Consider the following 470-residue polypeptide: Serine hydroxymethyltransferase 5 (470 aa).

Lys-244 is modified (N6-(pyridoxal phosphate)lysine).

The protein belongs to the SHMT family. Homotetramer. The cofactor is pyridoxal 5'-phosphate.

The protein resides in the cytoplasm. The catalysed reaction is (6R)-5,10-methylene-5,6,7,8-tetrahydrofolate + glycine + H2O = (6S)-5,6,7,8-tetrahydrofolate + L-serine. The protein operates within one-carbon metabolism; tetrahydrofolate interconversion. In terms of biological role, catalyzes the interconversion of serine and glycine. This Arabidopsis thaliana (Mouse-ear cress) protein is Serine hydroxymethyltransferase 5 (SHM5).